Consider the following 171-residue polypeptide: Crossover junction endodeoxyribonuclease RuvC (171 aa).

Active-site residues include D7, E66, and D138. Mg(2+) is bound by residues D7, E66, and D138.

This sequence belongs to the RuvC family. In terms of assembly, homodimer which binds Holliday junction (HJ) DNA. The HJ becomes 2-fold symmetrical on binding to RuvC with unstacked arms; it has a different conformation from HJ DNA in complex with RuvA. In the full resolvosome a probable DNA-RuvA(4)-RuvB(12)-RuvC(2) complex forms which resolves the HJ. The cofactor is Mg(2+).

The protein localises to the cytoplasm. The catalysed reaction is Endonucleolytic cleavage at a junction such as a reciprocal single-stranded crossover between two homologous DNA duplexes (Holliday junction).. In terms of biological role, the RuvA-RuvB-RuvC complex processes Holliday junction (HJ) DNA during genetic recombination and DNA repair. Endonuclease that resolves HJ intermediates. Cleaves cruciform DNA by making single-stranded nicks across the HJ at symmetrical positions within the homologous arms, yielding a 5'-phosphate and a 3'-hydroxyl group; requires a central core of homology in the junction. The consensus cleavage sequence is 5'-(A/T)TT(C/G)-3'. Cleavage occurs on the 3'-side of the TT dinucleotide at the point of strand exchange. HJ branch migration catalyzed by RuvA-RuvB allows RuvC to scan DNA until it finds its consensus sequence, where it cleaves and resolves the cruciform DNA. The protein is Crossover junction endodeoxyribonuclease RuvC of Francisella philomiragia subsp. philomiragia (strain ATCC 25017 / CCUG 19701 / FSC 153 / O#319-036).